The chain runs to 511 residues: Exodeoxyribonuclease 7 large subunit (511 aa).

It belongs to the XseA family. As to quaternary structure, heterooligomer composed of large and small subunits.

Its subcellular location is the cytoplasm. It catalyses the reaction Exonucleolytic cleavage in either 5'- to 3'- or 3'- to 5'-direction to yield nucleoside 5'-phosphates.. Functionally, bidirectionally degrades single-stranded DNA into large acid-insoluble oligonucleotides, which are then degraded further into small acid-soluble oligonucleotides. The chain is Exodeoxyribonuclease 7 large subunit from Brucella suis (strain ATCC 23445 / NCTC 10510).